A 457-amino-acid chain; its full sequence is tRNA modification GTPase MnmE (457 aa).

(6S)-5-formyl-5,6,7,8-tetrahydrofolate-binding residues include arginine 25, glutamate 87, and arginine 126. The TrmE-type G domain occupies 223–377 (GISTAIIGRP…IEERINQLFF (155 aa)). K(+) is bound at residue asparagine 233. GTP is bound by residues 233–238 (NVGKSS), 252–258 (TDIAGTT), and 277–280 (DTAG). A Mg(2+)-binding site is contributed by serine 237. Positions 252, 254, and 257 each coordinate K(+). Residue threonine 258 participates in Mg(2+) binding. Lysine 457 provides a ligand contact to (6S)-5-formyl-5,6,7,8-tetrahydrofolate.

This sequence belongs to the TRAFAC class TrmE-Era-EngA-EngB-Septin-like GTPase superfamily. TrmE GTPase family. Homodimer. Heterotetramer of two MnmE and two MnmG subunits. K(+) is required as a cofactor.

It localises to the cytoplasm. Functionally, exhibits a very high intrinsic GTPase hydrolysis rate. Involved in the addition of a carboxymethylaminomethyl (cmnm) group at the wobble position (U34) of certain tRNAs, forming tRNA-cmnm(5)s(2)U34. This is tRNA modification GTPase MnmE from Streptococcus gordonii (strain Challis / ATCC 35105 / BCRC 15272 / CH1 / DL1 / V288).